A 102-amino-acid polypeptide reads, in one-letter code: Small ribosomal subunit protein uS10 (102 aa).

The protein belongs to the universal ribosomal protein uS10 family. Part of the 30S ribosomal subunit.

In terms of biological role, involved in the binding of tRNA to the ribosomes. The protein is Small ribosomal subunit protein uS10 of Kosmotoga olearia (strain ATCC BAA-1733 / DSM 21960 / TBF 19.5.1).